The primary structure comprises 274 residues: Coiled-coil domain-containing protein 28A (274 aa).

Residues 121–166 (VSKSTGFSNPASQSTSQRPKLKRVMKEKTKPQGGEGKGAQSTPIQH) form a disordered region. Residues 122-138 (SKSTGFSNPASQSTSQR) show a composition bias toward polar residues. Residues 234–263 (KRKTASDSNLDRLLSDLEELNSSIQKLHLA) adopt a coiled-coil conformation.

This Homo sapiens (Human) protein is Coiled-coil domain-containing protein 28A (CCDC28A).